The primary structure comprises 460 residues: Photosystem II CP43 reaction center protein (460 aa).

M1 is a propeptide. The next 5 helical transmembrane spans lie at 56–80 (LFETSHFIPEKPLYEQGMILLPHLA), 121–142 (IVGPDVLEDSFSFFGYDWRDKN), 165–187 (KALFIGGIYDTWAPGGGDIRFIT), 242–262 (RPFSWARRAFVWSGEAYLSYS), and 278–299 (WYNNTVYPSEFYGPTAAEASQA). Position 354 (E354) interacts with [CaMn4O5] cluster. A helical transmembrane segment spans residues 434–458 (RARAAAAGFEKGINRENEPVLSMRP).

Belongs to the PsbB/PsbC family. PsbC subfamily. As to quaternary structure, PSII is composed of 1 copy each of membrane proteins PsbA, PsbB, PsbC, PsbD, PsbE, PsbF, PsbH, PsbI, PsbJ, PsbK, PsbL, PsbM, PsbT, PsbY, PsbZ, Psb30/Ycf12, at least 3 peripheral proteins of the oxygen-evolving complex and a large number of cofactors. It forms dimeric complexes. Requires Binds multiple chlorophylls and provides some of the ligands for the Ca-4Mn-5O cluster of the oxygen-evolving complex. It may also provide a ligand for a Cl- that is required for oxygen evolution. PSII binds additional chlorophylls, carotenoids and specific lipids. as cofactor.

Its subcellular location is the plastid. It localises to the chloroplast thylakoid membrane. Its function is as follows. One of the components of the core complex of photosystem II (PSII). It binds chlorophyll and helps catalyze the primary light-induced photochemical processes of PSII. PSII is a light-driven water:plastoquinone oxidoreductase, using light energy to abstract electrons from H(2)O, generating O(2) and a proton gradient subsequently used for ATP formation. This is Photosystem II CP43 reaction center protein from Cyanidium caldarium (Red alga).